The primary structure comprises 152 residues: Mid1-interacting protein 1A (152 aa).

Residues 87–105 are compositionally biased toward basic and acidic residues; that stretch reads SEDQRRKKDTSASEPVRTE. The disordered stretch occupies residues 87–109; sequence SEDQRRKKDTSASEPVRTEEESD.

Belongs to the SPOT14 family. As to expression, expressed for a short period in the cells that will produce the enveloping layer (EVL).

It is found in the nucleus. It localises to the cytoplasm. The protein localises to the cytoskeleton. Its function is as follows. Involved in stabilization of microtubules. May play a role in the regulation of lipogenesis. The sequence is that of Mid1-interacting protein 1A (mid1ip1a) from Danio rerio (Zebrafish).